The chain runs to 475 residues: Ribulose bisphosphate carboxylase large chain (475 aa).

The propeptide occupies 1 to 2; it reads MS. Position 3 is an N-acetylproline (Pro-3). Lys-14 is modified (N6,N6,N6-trimethyllysine). Asn-123 and Thr-173 together coordinate substrate. Lys-175 serves as the catalytic Proton acceptor. Residue Lys-177 participates in substrate binding. 3 residues coordinate Mg(2+): Lys-201, Asp-203, and Glu-204. Lys-201 is modified (N6-carboxylysine). The active-site Proton acceptor is His-294. Substrate is bound by residues Arg-295, His-327, and Ser-379.

This sequence belongs to the RuBisCO large chain family. Type I subfamily. Heterohexadecamer of 8 large chains and 8 small chains. Mg(2+) serves as cofactor.

It localises to the plastid. It is found in the chloroplast. It catalyses the reaction 2 (2R)-3-phosphoglycerate + 2 H(+) = D-ribulose 1,5-bisphosphate + CO2 + H2O. The enzyme catalyses D-ribulose 1,5-bisphosphate + O2 = 2-phosphoglycolate + (2R)-3-phosphoglycerate + 2 H(+). RuBisCO catalyzes two reactions: the carboxylation of D-ribulose 1,5-bisphosphate, the primary event in carbon dioxide fixation, as well as the oxidative fragmentation of the pentose substrate in the photorespiration process. Both reactions occur simultaneously and in competition at the same active site. The protein is Ribulose bisphosphate carboxylase large chain of Coleochaete orbicularis (Charophycean green alga).